The chain runs to 232 residues: MLKLTDITWLYHYLPMRFSLTVERGEQVAILGPSGAGKSTLLNLIAGFLTPASGSLTIDGVDHTTTPPSRRPVSMLFQENNLFSHLTVAQNIGLGLNPGLKLNAAQQEKMHAIARQMGIDNLMARLPGELSGGQRQRVALARCLVREQPILLLDEPFSALDPALRQEMLTLVSTSCQQQKMTLLMVSHSVEDAARIATRSVVVADGRIAWQGKTEELLSGKASASAILGITG.

Positions 2-230 constitute an ABC transporter domain; sequence LKLTDITWLY…KASASAILGI (229 aa). An ATP-binding site is contributed by 32–39; the sequence is GPSGAGKS.

The protein belongs to the ABC transporter superfamily. Thiamine importer (TC 3.A.1.19.1) family. As to quaternary structure, the complex is composed of two ATP-binding proteins (ThiQ), two transmembrane proteins (ThiP) and a solute-binding protein (ThiB).

Its subcellular location is the cell inner membrane. The catalysed reaction is thiamine(out) + ATP + H2O = thiamine(in) + ADP + phosphate + H(+). Its function is as follows. Part of the ABC transporter complex ThiBPQ involved in thiamine import. Responsible for energy coupling to the transport system. The chain is Thiamine import ATP-binding protein ThiQ from Shigella flexneri serotype 5b (strain 8401).